A 426-amino-acid polypeptide reads, in one-letter code: Serine--tRNA ligase (426 aa).

233–235 (TSE) provides a ligand contact to L-serine. 264–266 (RAE) is a binding site for ATP. Glutamate 287 is a binding site for L-serine. 351–354 (EISS) provides a ligand contact to ATP. An L-serine-binding site is contributed by serine 387.

This sequence belongs to the class-II aminoacyl-tRNA synthetase family. Type-1 seryl-tRNA synthetase subfamily. Homodimer. The tRNA molecule binds across the dimer.

The protein resides in the cytoplasm. The enzyme catalyses tRNA(Ser) + L-serine + ATP = L-seryl-tRNA(Ser) + AMP + diphosphate + H(+). It carries out the reaction tRNA(Sec) + L-serine + ATP = L-seryl-tRNA(Sec) + AMP + diphosphate + H(+). It functions in the pathway aminoacyl-tRNA biosynthesis; selenocysteinyl-tRNA(Sec) biosynthesis; L-seryl-tRNA(Sec) from L-serine and tRNA(Sec): step 1/1. Functionally, catalyzes the attachment of serine to tRNA(Ser). Is also able to aminoacylate tRNA(Sec) with serine, to form the misacylated tRNA L-seryl-tRNA(Sec), which will be further converted into selenocysteinyl-tRNA(Sec). In Stenotrophomonas maltophilia (strain K279a), this protein is Serine--tRNA ligase.